We begin with the raw amino-acid sequence, 899 residues long: Translation initiation factor IF-2 (899 aa).

Disordered stretches follow at residues 115–137 (EAKA…LQTE), 170–189 (RGGG…EQKK), and 262–309 (DREI…HGFE). The tr-type G domain occupies 399–568 (TRPPVVTIMG…LIQSELMELK (170 aa)). A G1 region spans residues 408–415 (GHVDHGKT). GTP is bound at residue 408 to 415 (GHVDHGKT). A G2 region spans residues 433–437 (GITQH). Residues 454–457 (DTPG) form a G3 region. GTP-binding positions include 454-458 (DTPGH) and 508-511 (NKMD). The tract at residues 508–511 (NKMD) is G4. Positions 544 to 546 (SAH) are G5.

It belongs to the TRAFAC class translation factor GTPase superfamily. Classic translation factor GTPase family. IF-2 subfamily.

Its subcellular location is the cytoplasm. In terms of biological role, one of the essential components for the initiation of protein synthesis. Protects formylmethionyl-tRNA from spontaneous hydrolysis and promotes its binding to the 30S ribosomal subunits. Also involved in the hydrolysis of GTP during the formation of the 70S ribosomal complex. This is Translation initiation factor IF-2 from Acinetobacter baumannii (strain SDF).